The sequence spans 916 residues: Calcium homeostasis endoplasmic reticulum protein (916 aa).

Residue Met-1 is modified to N-acetylmethionine. Residues Val-15–Lys-57 form an SURP motif repeat. Residue Lys-18 is modified to N6-acetyllysine. In terms of domain architecture, CID spans Glu-149 to Gly-289. Disordered regions lie at residues Gln-336–Pro-549 and His-601–Asn-635. A compositionally biased stretch (pro residues) spans Thr-354–Thr-374. Residues Trp-480 to Glu-501 show a composition bias toward polar residues. Positions Pro-525–Pro-541 are enriched in pro residues. Tyr-714 carries the phosphotyrosine modification. Residues Arg-722–Asp-878 form a disordered region. Basic residues predominate over residues Ser-739–Ser-749. Positions Ser-750–Arg-766 are enriched in low complexity. Positions Ser-767–Ser-815 are enriched in basic residues. Ser-813, Ser-815, and Ser-817 each carry phosphoserine. The residue at position 819 (Thr-819) is a Phosphothreonine. The residue at position 828 (Ser-828) is a Phosphoserine. One can recognise a G-patch domain in the interval Glu-841–Asp-891. Lys-844 is covalently cross-linked (Glycyl lysine isopeptide (Lys-Gly) (interchain with G-Cter in SUMO2)). Residues Ser-855 and Ser-857 each carry the phosphoserine modification. A Glycyl lysine isopeptide (Lys-Gly) (interchain with G-Cter in SUMO2) cross-link involves residue Lys-872. Residue Lys-879 is modified to N6-acetyllysine. The residue at position 904 (Ser-904) is a Phosphoserine.

In terms of tissue distribution, expressed in brain, placenta, lung, liver, kidney, pancreas, cardiac and skeletal muscle, and in cultured HEL and Dami cells.

It localises to the cytoplasm. Its subcellular location is the perinuclear region. It is found in the endoplasmic reticulum. Functionally, involved in calcium homeostasis, growth and proliferation. In Homo sapiens (Human), this protein is Calcium homeostasis endoplasmic reticulum protein.